A 947-amino-acid chain; its full sequence is Plasma membrane ATPase 2 (947 aa).

The interval 1 to 103 is disordered; it reads MSSTEAKQYK…TDGVHAGQRV (103 aa). At 1-144 the chain is on the cytoplasmic side; that stretch reads MSSTEAKQYK…AEENESLIVK (144 aa). The span at 7–22 shows a compositional bias: basic and acidic residues; that stretch reads KQYKEKPSKEYLHASD. The segment covering 26–61 has biased composition (low complexity); that stretch reads PANNSAASSSSSSSTSTSASSSAAAVPRKAAAASAA. Acidic residues predominate over residues 62 to 74; that stretch reads DDSDSDEDIDQLI. A helical transmembrane segment spans residues 145–165; it reads FLMFFVGPIQFVMEAAAILAA. Over 166-169 the chain is Extracellular; that stretch reads GLSD. A helical membrane pass occupies residues 170–189; that stretch reads WVDVGVICALLLLNASVGFI. Topologically, residues 190 to 320 are cytoplasmic; sequence QEFQAGSIVD…VEGHFTEVLN (131 aa). Residues 321–342 traverse the membrane as a helical segment; that stretch reads GIGIILLVLVIATLLLVWTACF. At 343–353 the chain is on the extracellular side; it reads YRTVGIVSILR. The helical transmembrane segment at 354 to 376 threads the bilayer; it reads YTLGITIIGVPVGLPAVVTTTMA. The Cytoplasmic segment spans residues 377–748; the sequence is VGAAYLAKKQ…IAILNNSLDI (372 aa). Asp407 functions as the 4-aspartylphosphate intermediate in the catalytic mechanism. Mg(2+) is bound by residues Asp663 and Asp667. The helical transmembrane segment at 749–767 threads the bilayer; the sequence is NLIVFIAIFADVATLTIAY. Over 768 to 783 the chain is Extracellular; that stretch reads DNAPYAPEPVKWNLPR. A helical transmembrane segment spans residues 784–803; the sequence is LWGMSIILGIVLAIGSWITL. Residues 804-853 are Cytoplasmic-facing; it reads TTMFLPNGGIIQNFGAMNGVMFLQISLTENWLIFVTRAAGPFWSSIPSWQ. Residues 854 to 874 form a helical membrane-spanning segment; the sequence is LAGAVFAVDIIATMFTLFGWW. Residues 875 to 886 lie on the Extracellular side of the membrane; that stretch reads SENWTDIVSVVR. A helical transmembrane segment spans residues 887–903; it reads VWIWSIGIFCVLGGFYY. At 904-947 the chain is on the cytoplasmic side; it reads IMSTSQAFDRLMNGKSLKEKKSTRSVEDFMAAMQRVSTQHEKSS.

This sequence belongs to the cation transport ATPase (P-type) (TC 3.A.3) family. Type IIIA subfamily.

It is found in the cell membrane. It carries out the reaction ATP + H2O + H(+)(in) = ADP + phosphate + 2 H(+)(out). Its function is as follows. The plasma membrane ATPase of plants and fungi is a hydrogen ion pump. The proton gradient it generates drives the active transport of nutrients by H(+)-symport. The resulting external acidification and/or internal alkinization may mediate growth responses. The sequence is that of Plasma membrane ATPase 2 (PMA2) from Saccharomyces cerevisiae (strain ATCC 204508 / S288c) (Baker's yeast).